We begin with the raw amino-acid sequence, 126 residues long: 13 kDa ribonucleoprotein-associated protein (126 aa).

The protein belongs to the eukaryotic ribosomal protein eL8 family. As to quaternary structure, component of the U3 snoRNP particle. Binds to the C'/D and B/C motifs in U3 snoRNA. Component of the 25S U4/U6.U5 tri-snRNP particle, a subcomplex of the spliceosome. Binds to the 5' stem-loop of U4 snRNA.

It is found in the nucleus. It localises to the nucleolus. Functionally, common component of the spliceosome and rRNA processing machinery. In association with the spliceosomal U4/U6.U5 tri-snRNP particle, required for splicing of pre-mRNA. In association with box C/D snoRNPs, required for processing of pre-ribosomal RNA (rRNA) and site-specific 2'-O-methylation of substrate RNAs. Essential for the accumulation and stability of U4 snRNA, U6 snRNA, and box C/D snoRNAs. The chain is 13 kDa ribonucleoprotein-associated protein (SNU13) from Mycosarcoma maydis (Corn smut fungus).